The sequence spans 190 residues: Small ribosomal subunit protein uS5 (190 aa).

The region spanning 19–82 (IIDKLVTINR…ERAKRSMIRV (64 aa)) is the S5 DRBM domain. Residues 161–190 (SVASRRGKKVSDILGRREPVAGQEGEEAHA) are disordered. Over residues 169–179 (KVSDILGRREP) the composition is skewed to basic and acidic residues.

This sequence belongs to the universal ribosomal protein uS5 family. Part of the 30S ribosomal subunit. Contacts proteins S4 and S8.

In terms of biological role, with S4 and S12 plays an important role in translational accuracy. Its function is as follows. Located at the back of the 30S subunit body where it stabilizes the conformation of the head with respect to the body. The polypeptide is Small ribosomal subunit protein uS5 (Granulibacter bethesdensis (strain ATCC BAA-1260 / CGDNIH1)).